The following is a 631-amino-acid chain: Glutamyl-tRNA(Gln) amidotransferase subunit E (631 aa).

It belongs to the GatB/GatE family. GatE subfamily. In terms of assembly, heterodimer of GatD and GatE.

It carries out the reaction L-glutamyl-tRNA(Gln) + L-glutamine + ATP + H2O = L-glutaminyl-tRNA(Gln) + L-glutamate + ADP + phosphate + H(+). Functionally, allows the formation of correctly charged Gln-tRNA(Gln) through the transamidation of misacylated Glu-tRNA(Gln) in organisms which lack glutaminyl-tRNA synthetase. The reaction takes place in the presence of glutamine and ATP through an activated gamma-phospho-Glu-tRNA(Gln). The GatDE system is specific for glutamate and does not act on aspartate. The protein is Glutamyl-tRNA(Gln) amidotransferase subunit E of Methanococcus maripaludis (strain C5 / ATCC BAA-1333).